Consider the following 237-residue polypeptide: Homeobox protein Nkx-3.1 (237 aa).

Residues 1-14 (MLRVAEPREPRVEA) are compositionally biased toward basic and acidic residues. Disordered regions lie at residues 1-96 (MLRV…EPES) and 108-130 (EHNP…RSRA). A compositionally biased stretch (polar residues) spans 24-34 (PTQSKRLTSFL). 2 stretches are compositionally biased toward basic and acidic residues: residues 38 to 47 (ILRDRAERHG) and 57 to 71 (PDPR…DKAG). A DNA-binding region (homeobox) is located at residues 125 to 184 (QKRSRAAFSHTQVIELERKFSHQKYLSAPERAHLAKNLKLTETQVKIWFQNRRYKTKRKQ).

Belongs to the NK-3 homeobox family. Interacts with serum response factor (SRF). Interacts with SPDEF. Interacts with WDR77. Interacts with TOPORS which polyubiquitinates NKX3-1 and induces its proteasomal degradation. Interacts with FEM1B. Post-translationally, ubiquitinated by TOPORS; monoubiquitinated at several residues and also polyubiquitinated on single residues. As to expression, expressed mostly in the male urogenital tract, with highest expression in the epithelial cells lining the ducts of anterior, dorsolateral and ventral prostate and in the bulbourethral gland, and much lower in the seminal vesicle and the testis. Expression in the prostate increases during sexual maturation and is drastically reduced following castration. Expressed also in brain (hippocampus and external granular layer of the cerebral cortex), kidney (intralobular arteries), thymus and adrenal and salivary glands.

The protein localises to the nucleus. Transcription factor, which binds preferentially the consensus sequence 5'-TAAGT[AG]-3' and can behave as a transcriptional repressor. Plays an important role in normal prostate development, regulating proliferation of glandular epithelium and in the formation of ducts in prostate. Acts as a tumor suppressor controlling prostate carcinogenesis, as shown by the ability to suppress growth and tumorigenicity of prostate carcinoma cells. Plays a role in the formation of minor salivary glands (particularly palatine and lingual glands). The sequence is that of Homeobox protein Nkx-3.1 from Mus musculus (Mouse).